The chain runs to 414 residues: ORC1-type DNA replication protein 1 (414 aa).

ATP contacts are provided by residues Thr-70–Ala-74, Tyr-213, and Arg-225.

The protein belongs to the CDC6/cdc18 family.

Functionally, involved in regulation of DNA replication. The polypeptide is ORC1-type DNA replication protein 1 (cdc6-1) (Methanosarcina acetivorans (strain ATCC 35395 / DSM 2834 / JCM 12185 / C2A)).